A 77-amino-acid polypeptide reads, in one-letter code: MSETRIDRMSNIKSYISNQKNIIQHDDFFGRRLDIALCFDHGFIMPAGVAIYSIIENNKDIDYALKQKERCQVKITL.

This is an uncharacterized protein from Salmonella typhimurium (strain LT2 / SGSC1412 / ATCC 700720).